A 1116-amino-acid chain; its full sequence is Pleckstrin homology domain-containing family A member 5 (1116 aa).

The residue at position 2 (A2) is an N-acetylalanine. The WW 1 domain maps to 10 to 43 (ISLPRSWTYGITRGGRVFFINEEAKSTTWLHPVT). S55 is modified (phosphoserine). Positions 56 to 89 (TDLPTGWEEAYTFEGARYYINHNERKVTCKHPVT) constitute a WW 2 domain. The segment at 140-163 (SPVGRTSRASKKVHNFGKRSNSIK) is disordered. The segment covering 147-156 (RASKKVHNFG) has biased composition (basic residues). One can recognise a PH domain in the interval 169–268 (PVVRRGWLYK…WMKAMLDAAL (100 aa)). K301 is covalently cross-linked (Glycyl lysine isopeptide (Lys-Gly) (interchain with G-Cter in SUMO2)). S382 and S410 each carry phosphoserine. T438 and T460 each carry phosphothreonine. The disordered stretch occupies residues 459-495 (RTLPRNSKTRPESICSVTPSTHDKTLGPGAEEKRRSM). Residues 479–495 (THDKTLGPGAEEKRRSM) are compositionally biased toward basic and acidic residues. S568, S607, S809, S855, S933, and S937 each carry phosphoserine. Disordered stretches follow at residues 928–978 (GASD…PATE) and 1025–1116 (RNKD…FMCV). The segment covering 930–949 (SDQSPLQSPSNLRDNPFRTT) has biased composition (polar residues). Basic and acidic residues predominate over residues 952-978 (RRRDDKELDTAIRENDVKPDHETPATE). Residues 1036 to 1046 (FSPQDETQTAN) are compositionally biased toward polar residues. Positions 1047–1061 (HKPEEHPEENTKNSV) are enriched in basic and acidic residues. Polar residues predominate over residues 1070–1085 (SYESTPEVSRGNQTMA). The span at 1088–1101 (SLSPSPESSASPVP) shows a compositional bias: low complexity.

In terms of tissue distribution, highly expressed in heart and kidney.

Its subcellular location is the cytoplasm. This Homo sapiens (Human) protein is Pleckstrin homology domain-containing family A member 5 (PLEKHA5).